A 353-amino-acid chain; its full sequence is Photosystem II protein D1 (353 aa).

Threonine 2 carries the post-translational modification N-acetylthreonine. Position 2 is a phosphothreonine (threonine 2). 3 helical membrane-spanning segments follow: residues 29 to 46 (YVGWFGVIMIPTLLTAVS), 118 to 133 (HFFLGICCYMGREWEL), and 142 to 156 (WIAVAYSAPVAAATA). Histidine 118 provides a ligand contact to chlorophyll a. Pheophytin a is bound at residue tyrosine 126. 2 residues coordinate [CaMn4O5] cluster: aspartate 170 and glutamate 189. Residues 197–218 (FHMLGVAGVFGGSLFSAMHGSL) traverse the membrane as a helical segment. Chlorophyll a is bound at residue histidine 198. A quinone contacts are provided by residues histidine 215 and 264–265 (SF). Fe cation is bound at residue histidine 215. Residue histidine 272 coordinates Fe cation. The chain crosses the membrane as a helical span at residues 274 to 288 (FLAAWPVVGIWFTAL). Residues histidine 332, glutamate 333, aspartate 342, and alanine 344 each coordinate [CaMn4O5] cluster. A propeptide spanning residues 345 to 353 (SVEAPSING) is cleaved from the precursor.

This sequence belongs to the reaction center PufL/M/PsbA/D family. PSII is composed of 1 copy each of membrane proteins PsbA, PsbB, PsbC, PsbD, PsbE, PsbF, PsbH, PsbI, PsbJ, PsbK, PsbL, PsbM, PsbT, PsbX, PsbY, PsbZ, Psb30/Ycf12, at least 3 peripheral proteins of the oxygen-evolving complex and a large number of cofactors. It forms dimeric complexes. The D1/D2 heterodimer binds P680, chlorophylls that are the primary electron donor of PSII, and subsequent electron acceptors. It shares a non-heme iron and each subunit binds pheophytin, quinone, additional chlorophylls, carotenoids and lipids. D1 provides most of the ligands for the Mn4-Ca-O5 cluster of the oxygen-evolving complex (OEC). There is also a Cl(-1) ion associated with D1 and D2, which is required for oxygen evolution. The PSII complex binds additional chlorophylls, carotenoids and specific lipids. serves as cofactor. In terms of processing, tyr-161 forms a radical intermediate that is referred to as redox-active TyrZ, YZ or Y-Z. Post-translationally, C-terminally processed by CTPA; processing is essential to allow assembly of the oxygen-evolving complex and thus photosynthetic growth.

The protein resides in the plastid. Its subcellular location is the chloroplast thylakoid membrane. It catalyses the reaction 2 a plastoquinone + 4 hnu + 2 H2O = 2 a plastoquinol + O2. Functionally, photosystem II (PSII) is a light-driven water:plastoquinone oxidoreductase that uses light energy to abstract electrons from H(2)O, generating O(2) and a proton gradient subsequently used for ATP formation. It consists of a core antenna complex that captures photons, and an electron transfer chain that converts photonic excitation into a charge separation. The D1/D2 (PsbA/PsbD) reaction center heterodimer binds P680, the primary electron donor of PSII as well as several subsequent electron acceptors. The protein is Photosystem II protein D1 of Tupiella akineta (Green alga).